Consider the following 521-residue polypeptide: Cytochrome b5 reductase 4 (521 aa).

M1 bears the N-acetylmethionine mark. Residues 1–18 (MLNVPSQSFPAPRSQQRV) show a composition bias toward polar residues. The tract at residues 1 to 27 (MLNVPSQSFPAPRSQQRVASGGRSKVP) is disordered. The Cytochrome b5 heme-binding domain maps to 54–130 (LIEVTEEELK…LKECLVGRMA (77 aa)). Heme contacts are provided by H89 and H112. The 92-residue stretch at 165–256 (PSYPSYDWFQ…KENTSWDFLG (92 aa)) folds into the CS domain. The region spanning 273-385 (LYYRKCQLIS…SSPEGNFKIS (113 aa)) is the FAD-binding FR-type domain. Residues 365 to 380 (DRLQIGDFVSVSSPEG) and 392 to 424 (DLFLLAAGTGFTPMVKILNYALTDIPSLRKVKL) each bind FAD.

It belongs to the flavoprotein pyridine nucleotide cytochrome reductase family. FAD is required as a cofactor. Widely expressed.

The protein localises to the endoplasmic reticulum. It catalyses the reaction 2 Fe(III)-[cytochrome b5] + NADH = 2 Fe(II)-[cytochrome b5] + NAD(+) + H(+). In terms of biological role, NADH-cytochrome b5 reductase involved in endoplasmic reticulum stress response pathway. Plays a critical role in protecting pancreatic beta-cells against oxidant stress, possibly by protecting the cell from excess buildup of reactive oxygen species (ROS). Reduces a variety of substrates in vitro, such as cytochrome c, feericyanide and methemoglobin. In Homo sapiens (Human), this protein is Cytochrome b5 reductase 4.